The following is a 613-amino-acid chain: 9-cis-epoxycarotenoid dioxygenase NCED5, chloroplastic (613 aa).

Polar residues predominate over residues 1–15 (MPTTFTPNSPASSCS). The N-terminal 36 residues, 1-36 (MPTTFTPNSPASSCSIHHRASPSRGARNSVRFTRPR), are a transit peptide targeting the chloroplast. Residues 1–62 (MPTTFTPNSP…PPAYVPPPPP (62 aa)) form a disordered region. Positions 37–50 (AAAAATNSVLSAPS) are enriched in low complexity. The span at 51 to 62 (SVPPAYVPPPPP) shows a compositional bias: pro residues. His305, His354, His419, and His600 together coordinate Fe cation.

It belongs to the carotenoid oxygenase family. Requires Fe(2+) as cofactor.

The protein localises to the plastid. It is found in the chloroplast. The enzyme catalyses a 9-cis-epoxycarotenoid + O2 = a 12'-apo-carotenal + 2-cis,4-trans-xanthoxin. The catalysed reaction is 9-cis-violaxanthin + O2 = (3S,5R,6S)-5,6-epoxy-3-hydroxy-5,6-dihydro-12'-apo-beta-caroten-12'-al + 2-cis,4-trans-xanthoxin. It carries out the reaction 9'-cis-neoxanthin + O2 = (3S,5R,6R)-3,5-dihydroxy-6,7-didehydro-5,6-dihydro-12'-apo-beta-caroten-12'-al + 2-cis,4-trans-xanthoxin. Has a 11,12(11',12') 9-cis epoxycarotenoid cleavage activity. Catalyzes the first step of abscisic-acid biosynthesis from carotenoids. The protein is 9-cis-epoxycarotenoid dioxygenase NCED5, chloroplastic of Oryza sativa subsp. japonica (Rice).